Consider the following 354-residue polypeptide: Protein sex-lethal (354 aa).

The interval 1–20 (MYGNNNPGSNNNNGGYPPYG) is disordered. RRM domains lie at 127-205 (TNLI…YARP) and 213-293 (TNLY…LAQE).

As to quaternary structure, part of a complex containing fl(2)d, Sxl and vir. Interacts with nito. Interacts with Unr; cooperates with Sxl to prevent translation of msl-2 transcripts. Interacts with how; promoting nuclear retention of msl-2 transcripts. The embryo-specific isoform is not expressed in the pole cells, which are the progenitors of the germline.

It localises to the nucleus. The protein resides in the cytoplasm. Functionally, sex determination switch protein, which controls sexual development and dosage compensation in females. Sxl protein is only active in females: it is inactive in males throughout development. Acts as a mRNA-binding protein, which specifically binds to a subset of pre-mRNAs and mRNAs and regulates their processing and/or translation. Promotes sexual development by controlling the female-specific alternative splicing of the transformer (tra) pre-mRNA: binds tightly to a characteristic uridine-rich polypyrimidine tract at the non-sex specific 3' splice site in one of the tra introns, preventing the general splicing factor U2AF from binding to this site and forcing it to bind to the female-specific 3' splice site. Acts as an inhibitor of dosage compensation in females by preventing production of msl-2 protein, an essential component of the MSL complex, the complex that mediates X-chromosome dosage compensation. Specifially binds to uridine stretches in both the 5'- and 3'-UTR of msl-2 transcripts. Sxl first acts at the splicing level by promoting retention of an intron in the 5' UTR of msl-2 pre-mRNA. The retained intron contains Sxl-binding sites that are required for subsequent steps of repression: after msl-2 mRNA export into the cytoplasm, Sxl coordinates its translational repression by targeting early steps of translation initiation. Together with how, Sxl also prevents production of msl-2 protein by preventing nuclear export of msl-2 transcripts. This Drosophila subobscura (Fruit fly) protein is Protein sex-lethal.